We begin with the raw amino-acid sequence, 97 residues long: Aspartyl/glutamyl-tRNA(Asn/Gln) amidotransferase subunit C (97 aa).

The protein belongs to the GatC family. As to quaternary structure, heterotrimer of A, B and C subunits.

The catalysed reaction is L-glutamyl-tRNA(Gln) + L-glutamine + ATP + H2O = L-glutaminyl-tRNA(Gln) + L-glutamate + ADP + phosphate + H(+). The enzyme catalyses L-aspartyl-tRNA(Asn) + L-glutamine + ATP + H2O = L-asparaginyl-tRNA(Asn) + L-glutamate + ADP + phosphate + 2 H(+). In terms of biological role, allows the formation of correctly charged Asn-tRNA(Asn) or Gln-tRNA(Gln) through the transamidation of misacylated Asp-tRNA(Asn) or Glu-tRNA(Gln) in organisms which lack either or both of asparaginyl-tRNA or glutaminyl-tRNA synthetases. The reaction takes place in the presence of glutamine and ATP through an activated phospho-Asp-tRNA(Asn) or phospho-Glu-tRNA(Gln). This chain is Aspartyl/glutamyl-tRNA(Asn/Gln) amidotransferase subunit C, found in Nostoc punctiforme (strain ATCC 29133 / PCC 73102).